Consider the following 198-residue polypeptide: MAKQPSDVSSECDREGRQLQPAERPPQLRPGAPTSLQTEPQGNPEGNHGGEGDSCPHGSPQGPLAPPASPGPFATRSPLFIFMRRSSLLSRSSSGYFSFDTDRSPAPMSCDKSTQTPSPPCQAFNHYLSAMASMRQAEPADMRPEIWIAQELRRIGDEFNAYYARRVFLNNYQAAEDHPRMVILRLLRYIVRLVWRMH.

The disordered stretch occupies residues 1 to 72 (MAKQPSDVSS…PLAPPASPGP (72 aa)). S69 is subject to Phosphoserine; by MAPK. Residues S77, S87, and S94 each carry the phosphoserine modification. The short motif at 148 to 162 (IAQELRRIGDEFNAY) is the BH3 element.

Belongs to the Bcl-2 family. In terms of assembly, forms heterodimers with a number of antiapoptotic Bcl-2 proteins, including MCL1, BCL2, BCL2L1 isoform Bcl-X(L), BCL2A1/BFL-1, BHRF1, and BCL2L2/BCLW. Does not heterodimerize with proapoptotic proteins such as BAD, BOK or BAK. Identified in a complex containing BCL2L11, DYNLL1 and BCL2L1 isoform Bcl-X(L); BH3 integrity is required for BCL2L1-binding. Interacts with YWHAZ. When phosphorylated, interacts with TRIM2; this interaction is associated with ubiquitination and degradation. Interacts with MCL1; may sequester BCL2L11 to prevent its pro-apoptotic activity. Interacts with GIMAP5. Interacts with BCL2L10/BCL-B. Interacts (when phosphorylated) with USP27X; the interaction leads to BCL2L11 deubiquitination and stabilization. Interacts with humanin; the interaction prevents BIM-induced apoptosis. As to quaternary structure, does not interact with humanin. In terms of assembly, interacts with BAX; the interaction may lead to BAX activation through conformational change. Does not interact with humanin. Interacts with BAX; the interaction may lead to BAX activation through conformational change. Phosphorylation at Ser-69 by MAPK1/MAPK3 leads to interaction with TRIM2 and polyubiquitination, followed by proteasomal degradation. Deubiquitination catalyzed by USP27X stabilizes the protein. Post-translationally, ubiquitination by TRIM2 following phosphorylation by MAPK1/MAPK3 leads to proteasomal degradation. Conversely, deubiquitination catalyzed by USP27X stabilizes the protein. In terms of tissue distribution, isoform BimEL, isoform BimL and isoform BimS are the predominant isoforms and are widely expressed with tissue-specific variation. Isoform Bim-gamma is most abundantly expressed in small intestine and colon, and in lower levels in spleen, prostate, testis, heart, liver and kidney.

The protein localises to the endomembrane system. It is found in the mitochondrion. Induces apoptosis and anoikis. Isoform BimL is more potent than isoform BimEL. Isoform Bim-alpha1, isoform Bim-alpha2 and isoform Bim-alpha3 induce apoptosis, although less potent than isoform BimEL, isoform BimL and isoform BimS. Isoform Bim-gamma induces apoptosis. Isoform Bim-alpha3 induces apoptosis possibly through a caspase-mediated pathway. Isoform BimAC and isoform BimABC lack the ability to induce apoptosis. This Homo sapiens (Human) protein is Bcl-2-like protein 11 (BCL2L11).